A 111-amino-acid polypeptide reads, in one-letter code: Heavy metal-associated isoprenylated plant protein 10 (111 aa).

The HMA domain maps to 1–68 (MQETVVFEWG…ICDYVDITAV (68 aa)). Residues 68 to 111 (VGPEGQPAQNRNPVKKPEPKVIRGRPYPPQKKTPGKNSDECIIL) are disordered. Cys108 is subject to Cysteine methyl ester. Residue Cys108 is the site of S-farnesyl cysteine attachment. A propeptide spans 109 to 111 (IIL) (removed in mature form).

Belongs to the HIPP family.

Functionally, probable heavy-metal-binding protein. In Arabidopsis thaliana (Mouse-ear cress), this protein is Heavy metal-associated isoprenylated plant protein 10.